The primary structure comprises 280 residues: 4-diphosphocytidyl-2-C-methyl-D-erythritol kinase (280 aa).

The active site involves lysine 8. 91-101 serves as a coordination point for ATP; the sequence is PVAAGLAGGST. Aspartate 133 is a catalytic residue.

The protein belongs to the GHMP kinase family. IspE subfamily.

The catalysed reaction is 4-CDP-2-C-methyl-D-erythritol + ATP = 4-CDP-2-C-methyl-D-erythritol 2-phosphate + ADP + H(+). It functions in the pathway isoprenoid biosynthesis; isopentenyl diphosphate biosynthesis via DXP pathway; isopentenyl diphosphate from 1-deoxy-D-xylulose 5-phosphate: step 3/6. In terms of biological role, catalyzes the phosphorylation of the position 2 hydroxy group of 4-diphosphocytidyl-2C-methyl-D-erythritol. In Clostridium botulinum (strain ATCC 19397 / Type A), this protein is 4-diphosphocytidyl-2-C-methyl-D-erythritol kinase.